The chain runs to 460 residues: MSLWGGRFTKISNTEFDSFNNSLRIDHRLIKDDIKSSIAWSKILLDVQVLTKKEQKIIENTLLSILKKNKNNFTKILSSNSEDIHSWLETTVINTIGDLGKKLYTGRSRNDQIATDLKLWCKRKSKKICRRIIQLQNDFLDNAYLHINTIIPGYTHLQRAQPITFSYWCLAYIEMLERDRLRILNLTQFLNSSPLGSGAISGTSWEIDRKKLAFFMGFSEITKNALDSVSDRDFILDILSAAAISMMHLSRFSEDLIFYNSGEANFIELSDSITSGSSLMPQKKNPDILELIRAKCSSVYGSLFSMFSLLKGLPLSYNKDFQEDKNHLFSGLDIWEDCLKISSLVLKNIKLKKSNCKKSAQLGYSNATELAEYLVKKGISFRDSHHITGKIVIASIKKNKCLEELDLLFLKKYCSKIESDVYQHLSLESCLNKKNSIGGVSNKQIKISLDQVKKRLSTFK.

This sequence belongs to the lyase 1 family. Argininosuccinate lyase subfamily.

It localises to the cytoplasm. The enzyme catalyses 2-(N(omega)-L-arginino)succinate = fumarate + L-arginine. Its pathway is amino-acid biosynthesis; L-arginine biosynthesis; L-arginine from L-ornithine and carbamoyl phosphate: step 3/3. The chain is Argininosuccinate lyase from Buchnera aphidicola subsp. Cinara cedri (strain Cc).